Reading from the N-terminus, the 72-residue chain is Translation initiation factor IF-1 (72 aa).

The S1-like domain maps to Met1 to Lys72.

Belongs to the IF-1 family. As to quaternary structure, component of the 30S ribosomal translation pre-initiation complex which assembles on the 30S ribosome in the order IF-2 and IF-3, IF-1 and N-formylmethionyl-tRNA(fMet); mRNA recruitment can occur at any time during PIC assembly.

It localises to the cytoplasm. Its function is as follows. One of the essential components for the initiation of protein synthesis. Stabilizes the binding of IF-2 and IF-3 on the 30S subunit to which N-formylmethionyl-tRNA(fMet) subsequently binds. Helps modulate mRNA selection, yielding the 30S pre-initiation complex (PIC). Upon addition of the 50S ribosomal subunit IF-1, IF-2 and IF-3 are released leaving the mature 70S translation initiation complex. This chain is Translation initiation factor IF-1, found in Nitrosomonas eutropha (strain DSM 101675 / C91 / Nm57).